A 339-amino-acid chain; its full sequence is DNA-directed RNA polymerase subunit alpha (339 aa).

Residues 1 to 233 are alpha N-terminal domain (alpha-NTD); sequence MVREEVAGST…DLFLPFLHAE (233 aa). Residues 266 to 339 form an alpha C-terminal domain (alpha-CTD) region; sequence GIPLNCIFID…IDLLKNKLSF (74 aa).

It belongs to the RNA polymerase alpha chain family. In plastids the minimal PEP RNA polymerase catalytic core is composed of four subunits: alpha, beta, beta', and beta''. When a (nuclear-encoded) sigma factor is associated with the core the holoenzyme is formed, which can initiate transcription.

The protein resides in the plastid. It localises to the chloroplast. It carries out the reaction RNA(n) + a ribonucleoside 5'-triphosphate = RNA(n+1) + diphosphate. Functionally, DNA-dependent RNA polymerase catalyzes the transcription of DNA into RNA using the four ribonucleoside triphosphates as substrates. This chain is DNA-directed RNA polymerase subunit alpha, found in Aegilops speltoides (Goatgrass).